Here is a 694-residue protein sequence, read N- to C-terminus: Probable methyltransferase PMT11 (694 aa).

The Cytoplasmic portion of the chain corresponds to 1–14; the sequence is MKPLTNGDLFKSPT. A helical; Signal-anchor for type II membrane protein membrane pass occupies residues 15 to 32; that stretch reads LIKISALVFVTVAFFYLG. Residues 33-694 are Lumenal-facing; sequence KHWSDDGYQQ…LTCEKRLLRA (662 aa). N69 and N77 each carry an N-linked (GlcNAc...) asparagine glycan. The segment at 83–128 is disordered; sequence IPATIRQQPPSVVADTEKVKVEANPPPPPPPSPSPPPPPGPVKSFG. Residues 106–123 show a composition bias toward pro residues; sequence NPPPPPPPSPSPPPPPGP. Residues N155, N378, and N423 are each glycosylated (N-linked (GlcNAc...) asparagine).

Belongs to the methyltransferase superfamily.

The protein localises to the golgi apparatus membrane. This Arabidopsis thaliana (Mouse-ear cress) protein is Probable methyltransferase PMT11.